The sequence spans 73 residues: Putative antimicrobial peptide clone 4 (73 aa).

Positions 1–22 are cleaved as a signal peptide; the sequence is MQMKYLIPIFFLVLIVADHCHA. The propeptide occupies 45 to 73; that stretch reads DITSQIEQYRNLQKREAELEDILANLPVY.

It belongs to the non-disulfide-bridged peptide (NDBP) superfamily. Short antimicrobial peptide (group 4) family. As to expression, expressed by the venom gland.

The protein resides in the secreted. Functionally, antimicrobial peptide. Has a high antibacterial activity against the Gram-positive bacterium S.aureus (MIC=5-17.30 uM), the methicillin-resistant S.aureus (MRSA) (MIC=17.30 uM), and E.faecalis (MIC=69.23 uM). Has antifungal activity against Candida spp. and one Cryptococcus neoformans strains with MICs values ranging from 6.25 to 100 uM. Also shows an inhibitory activity on C.albicans biofilms at high concentrations. Has a moderate hemolytic potency (18% at 20 uM). Also inhibits the growth of the five cancer cell lines tested. In the model of polymicrobial sepsis, it exhibits an antibiotic effect, reducing the levels of microorganisms in the infectious focus and the inflammatory responses in the lung and cecum of septic animals. In Tityus costatus (Brazilian scorpion), this protein is Putative antimicrobial peptide clone 4.